We begin with the raw amino-acid sequence, 730 residues long: Dual function macrocyclase-peptidase POPB (730 aa).

A disordered region spans residues 1–34 (MSSVTWAPGNYPSTRRSDHVDTYQSASKGEVPVP). Active-site charge relay system residues include Ser-577, Asp-661, and His-698.

The protein belongs to the peptidase S9A family. As to quaternary structure, monomer.

It catalyses the reaction Hydrolysis of Pro-|-Xaa &gt;&gt; Ala-|-Xaa in oligopeptides.. Dual function macrocyclase-peptidase involved in the biosynthesis of the highly toxic amanitin toxin family of macrocycles. Cleaves peptide bonds on the C-terminal side of prolyl residues. The enzyme first removes 10 residues from the N-terminus of a 35-residue substrate. Conformational trapping of the 25 amino-acid peptide forces the enzyme to release this intermediate rather than proceed to macrocyclization. The enzyme rebinds the 25 amino-acid peptide in a different conformation and catalyzes macrocyclization of the N-terminal eight residues. This Galerina marginata (strain CBS 339.88) protein is Dual function macrocyclase-peptidase POPB.